A 548-amino-acid polypeptide reads, in one-letter code: T-complex protein 1 subunit theta (548 aa).

Ala2 is subject to N-acetylalanine. Phosphoserine is present on Ser23. Position 30 is a phosphotyrosine (Tyr30). ADP-binding residues include Tyr47 and Gly48. Position 99 (Asp99) interacts with Mg(2+). The ADP site is built by Gly100, Thr101, Asn102, and Phe103. ATP is bound by residues Gly100, Thr101, and Asn102. Ser162 carries the phosphoserine modification. ADP-binding residues include Met169, Ser170, and Lys171. ATP-binding residues include Ser170 and Lys171. Glycyl lysine isopeptide (Lys-Gly) (interchain with G-Cter in SUMO2) cross-links involve residues Lys224, Lys254, and Lys260. Ser269 and Ser317 each carry phosphoserine. N6-acetyllysine occurs at positions 318 and 400. Gly412 contacts ADP. Gly412 serves as a coordination point for ATP. Residue Lys459 forms a Glycyl lysine isopeptide (Lys-Gly) (interchain with G-Cter in SUMO1) linkage. Lys466 is modified (N6-acetyllysine). Position 499 (Asp499) interacts with ADP. 2 residues coordinate ATP: Asp499 and Lys504. Phosphotyrosine is present on Tyr505. Residues 529 to 548 (PAGGPKPPSGKKDWDDDQND) form a disordered region. Lys534 is covalently cross-linked (Glycyl lysine isopeptide (Lys-Gly) (interchain with G-Cter in SUMO2)). Ser537 bears the Phosphoserine mark. Residue Lys539 forms a Glycyl lysine isopeptide (Lys-Gly) (interchain with G-Cter in SUMO2) linkage.

This sequence belongs to the TCP-1 chaperonin family. As to quaternary structure, component of the chaperonin-containing T-complex (TRiC), a hexadecamer composed of two identical back-to-back stacked rings enclosing a protein folding chamber. Each ring is made up of eight different subunits: TCP1/CCT1, CCT2, CCT3, CCT4, CCT5, CCT6A/CCT6, CCT7, CCT8. Interacts with PACRG. Interacts with DNAAF4. Interacts with synaptic plasticity regulator PANTS.

The protein localises to the cytoplasm. The protein resides in the cytoskeleton. Its subcellular location is the microtubule organizing center. It is found in the centrosome. It localises to the cilium basal body. The catalysed reaction is ATP + H2O = ADP + phosphate + H(+). In terms of biological role, component of the chaperonin-containing T-complex (TRiC), a molecular chaperone complex that assists the folding of actin, tubulin and other proteins upon ATP hydrolysis. The TRiC complex mediates the folding of WRAP53/TCAB1, thereby regulating telomere maintenance. As part of the TRiC complex may play a role in the assembly of BBSome, a complex involved in ciliogenesis regulating transports vesicles to the cilia. This Mus musculus (Mouse) protein is T-complex protein 1 subunit theta (Cct8).